Here is a 227-residue protein sequence, read N- to C-terminus: Uracil-DNA glycosylase (227 aa).

Asp-65 functions as the Proton acceptor in the catalytic mechanism.

Belongs to the uracil-DNA glycosylase (UDG) superfamily. UNG family.

It localises to the cytoplasm. It carries out the reaction Hydrolyzes single-stranded DNA or mismatched double-stranded DNA and polynucleotides, releasing free uracil.. Its function is as follows. Excises uracil residues from the DNA which can arise as a result of misincorporation of dUMP residues by DNA polymerase or due to deamination of cytosine. This Lactobacillus delbrueckii subsp. bulgaricus (strain ATCC 11842 / DSM 20081 / BCRC 10696 / JCM 1002 / NBRC 13953 / NCIMB 11778 / NCTC 12712 / WDCM 00102 / Lb 14) protein is Uracil-DNA glycosylase.